A 276-amino-acid chain; its full sequence is 2-dehydro-3-deoxyphosphooctonate aldolase (276 aa).

The protein belongs to the KdsA family.

It is found in the cytoplasm. It carries out the reaction D-arabinose 5-phosphate + phosphoenolpyruvate + H2O = 3-deoxy-alpha-D-manno-2-octulosonate-8-phosphate + phosphate. It functions in the pathway carbohydrate biosynthesis; 3-deoxy-D-manno-octulosonate biosynthesis; 3-deoxy-D-manno-octulosonate from D-ribulose 5-phosphate: step 2/3. The polypeptide is 2-dehydro-3-deoxyphosphooctonate aldolase (Stenotrophomonas maltophilia (strain K279a)).